A 445-amino-acid chain; its full sequence is Phosphoglucosamine mutase (445 aa).

The Phosphoserine intermediate role is filled by Ser-102. 4 residues coordinate Mg(2+): Ser-102, Asp-241, Asp-243, and Asp-245. Position 102 is a phosphoserine (Ser-102).

The protein belongs to the phosphohexose mutase family. It depends on Mg(2+) as a cofactor. In terms of processing, activated by phosphorylation.

It carries out the reaction alpha-D-glucosamine 1-phosphate = D-glucosamine 6-phosphate. Catalyzes the conversion of glucosamine-6-phosphate to glucosamine-1-phosphate. This Escherichia coli O139:H28 (strain E24377A / ETEC) protein is Phosphoglucosamine mutase.